A 535-amino-acid chain; its full sequence is CTP synthase (535 aa).

Positions 1–268 are amidoligase domain; the sequence is MSTKYIFVTG…DQIVCDHLKL (268 aa). A CTP-binding site is contributed by Ser14. Ser14 lines the UTP pocket. 15–20 provides a ligand contact to ATP; that stretch reads SMGKGI. Tyr55 is an L-glutamine binding site. Asp72 contacts ATP. Asp72 and Glu142 together coordinate Mg(2+). CTP-binding positions include 149–151, 189–194, and Lys225; these read DME and KTKIAQ. UTP contacts are provided by residues 189–194 and Lys225; that span reads KTKIAQ. The Glutamine amidotransferase type-1 domain maps to 293–535; it reads KIALVGKYVE…FIRVAVENSK (243 aa). Gly355 contributes to the L-glutamine binding site. Cys382 (nucleophile; for glutamine hydrolysis) is an active-site residue. Residues 383 to 386, Glu406, and Arg464 contribute to the L-glutamine site; that span reads LGMQ. Residues His509 and Glu511 contribute to the active site.

It belongs to the CTP synthase family. As to quaternary structure, homotetramer.

The catalysed reaction is UTP + L-glutamine + ATP + H2O = CTP + L-glutamate + ADP + phosphate + 2 H(+). It carries out the reaction L-glutamine + H2O = L-glutamate + NH4(+). The enzyme catalyses UTP + NH4(+) + ATP = CTP + ADP + phosphate + 2 H(+). The protein operates within pyrimidine metabolism; CTP biosynthesis via de novo pathway; CTP from UDP: step 2/2. Its activity is regulated as follows. Allosterically activated by GTP, when glutamine is the substrate; GTP has no effect on the reaction when ammonia is the substrate. The allosteric effector GTP functions by stabilizing the protein conformation that binds the tetrahedral intermediate(s) formed during glutamine hydrolysis. Inhibited by the product CTP, via allosteric rather than competitive inhibition. In terms of biological role, catalyzes the ATP-dependent amination of UTP to CTP with either L-glutamine or ammonia as the source of nitrogen. Regulates intracellular CTP levels through interactions with the four ribonucleotide triphosphates. This Lactococcus lactis subsp. lactis (strain IL1403) (Streptococcus lactis) protein is CTP synthase.